Reading from the N-terminus, the 85-residue chain is DNA-directed RNA polymerase subunit Rpo11 (85 aa).

Belongs to the archaeal Rpo11/eukaryotic RPB11/RPC19 RNA polymerase subunit family. In terms of assembly, part of the RNA polymerase complex.

The protein localises to the cytoplasm. The catalysed reaction is RNA(n) + a ribonucleoside 5'-triphosphate = RNA(n+1) + diphosphate. DNA-dependent RNA polymerase (RNAP) catalyzes the transcription of DNA into RNA using the four ribonucleoside triphosphates as substrates. The protein is DNA-directed RNA polymerase subunit Rpo11 of Methanothermobacter thermautotrophicus (strain ATCC 29096 / DSM 1053 / JCM 10044 / NBRC 100330 / Delta H) (Methanobacterium thermoautotrophicum).